Consider the following 423-residue polypeptide: MSFTTRSTTFSTNYRSLGSVRTPSQRVRPASSAASVYAGAGGSGSRISVSRSVWGGSVGSAGLAGMGGVQTEKETMQDLNDRLASYLDKVKNLETENRRLESKIREYLEKRGPQGVRDWGHYFKTIEDLRAQIFANSVDNARIVLQIDNARLAADDFRVKYETELAMRQSVESDIHGLRKVVDDTNITRLQLETEIEALKEELLFMKKNHEEEVQGLEAQIASSGLTVEVDAPKSQDLSKIMADIRAQYEQLAQKNREELDKYWSQQIEESTTVVTTKSAEIRDAETTLLELRRTLQTLEIDLDSMKNQNINLENNLGEVEARYRVQMEQLNGVLLHLESELAQTRAEGQRQTQEYEALLNIKVKLEAEIATYRRLLEDGDDFSLNDALDSSNSMQTVQRTTTRKVVDGKVVSETNDTRVLRH.

The residue at position 2 (Ser-2) is an N-acetylserine. Positions 2–71 are head; that stretch reads SFTTRSTTFS…GLAGMGGVQT (70 aa). Phosphoserine occurs at positions 7, 11, 16, and 19. Phosphoserine; alternate occurs at positions 31 and 32. O-linked (GlcNAc) serine; alternate glycosylation is found at Ser-31 and Ser-32. Phosphoserine is present on Ser-35. Tyr-37 carries the post-translational modification Phosphotyrosine. Residue Ser-43 is modified to Phosphoserine. The residue at position 46 (Arg-46) is an Omega-N-methylarginine. A Phosphoserine; alternate modification is found at Ser-50. The O-linked (GlcNAc) serine; alternate glycan is linked to Ser-50. Ser-52 carries the post-translational modification Phosphoserine; by MAPKAPK2 and MAPKAPK3. Phosphoserine occurs at positions 57 and 60. The tract at residues 62–366 is necessary for interaction with PNN; the sequence is GLAGMGGVQT…EALLNIKVKL (305 aa). Residues 69–121 form an interaction with TRADD region; that stretch reads VQTEKETMQDLNDRLASYLDKVKNLETENRRLESKIREYLEKRGPQGVRDWGH. A coil 1A region spans residues 72 to 107; sequence EKETMQDLNDRLASYLDKVKNLETENRRLESKIREY. The 313-residue stretch at 72–384 folds into the IF rod domain; sequence EKETMQDLND…RLLEDGDDFS (313 aa). Lys-73 participates in a covalent cross-link: Glycyl lysine isopeptide (Lys-Gly) (interchain with G-Cter in SUMO2). A Phosphoserine modification is found at Ser-85. The tract at residues 108–125 is linker 1; it reads LEKRGPQGVRDWGHYFKT. Lys-124 bears the N6-acetyllysine mark. Residues 126 to 217 are coil 1B; the sequence is IEDLRAQIFA…KNHEEEVQGL (92 aa). Phosphoserine is present on residues Ser-137 and Ser-170. The tract at residues 218 to 241 is linker 12; that stretch reads EAQIASSGLTVEVDAPKSQDLSKI. The interval 236–384 is interaction with DNAJB6; it reads QDLSKIMADI…RLLEDGDDFS (149 aa). Lys-240 is covalently cross-linked (Glycyl lysine isopeptide (Lys-Gly) (interchain with G-Cter in SUMO2)). The coil 2 stretch occupies residues 242–380; the sequence is MADIRAQYEQ…ATYRRLLEDG (139 aa). Phosphothreonine is present on Thr-295. Residues Lys-363 and Lys-365 each participate in a glycyl lysine isopeptide (Lys-Gly) (interchain with G-Cter in SUMO2) cross-link. A tail region spans residues 381 to 423; that stretch reads DDFSLNDALDSSNSMQTVQRTTTRKVVDGKVVSETNDTRVLRH. Ser-384, Ser-391, Ser-392, and Ser-394 each carry phosphoserine. The residue at position 397 (Thr-397) is a Phosphothreonine. A Glycyl lysine isopeptide (Lys-Gly) (interchain with G-Cter in SUMO2) cross-link involves residue Lys-410.

This sequence belongs to the intermediate filament family. Heterotetramer of two type I and two type II keratins. KRT18 associates with KRT8. Interacts with PNN and mutated CFTR. Interacts with YWHAE, YWHAH and YWHAZ only when phosphorylated. Interacts with DNAJB6, TCHP and TRADD. Interacts with the thrombin-antithrombin complex. Interacts with FAM83H. Interacts with EPPK1. Interacts with PKP1 and PKP2. Post-translationally, phosphorylation increases by IL-6. Proteolytically cleaved by caspases during epithelial cell apoptosis. Cleavage occurs at Asp-231 by either caspase-3, caspase-6 or caspase-7. In terms of processing, dephosphorylated by ethanol. Post-translationally, O-GlcNAcylation increases solubility, and decreases stability by inducing proteasomal degradation. In terms of tissue distribution, expressed on the plasma membrane of hepatocytes and in the narrow apical portions of supporting cells in the vomeronasal sensory epithelium. Detected in the type III alveolar cells of the lung, in the proliferative crypt epithelium of the small intestine and in the older intragemmal cells of the tongue.

It localises to the nucleus matrix. It is found in the cytoplasm. Its subcellular location is the perinuclear region. The protein resides in the nucleus. The protein localises to the nucleolus. In terms of biological role, when phosphorylated, plays a role in filament reorganization. Involved in the delivery of mutated CFTR to the plasma membrane. Together with KRT8, is involved in interleukin-6 (IL-6)-mediated barrier protection. Involved in the uptake of thrombin-antithrombin complexes by hepatic cells. The polypeptide is Keratin, type I cytoskeletal 18 (Rattus norvegicus (Rat)).